Here is a 484-residue protein sequence, read N- to C-terminus: tRNA sulfurtransferase (484 aa).

The 105-residue stretch at 63 to 167 (ANLILLLSST…NEKLFFIDKK (105 aa)) folds into the THUMP domain. Residues 185–186 (LI), lysine 267, glycine 289, and glutamine 298 each bind ATP. A disulfide bridge connects residues cysteine 346 and cysteine 458. The Rhodanese domain occupies 406–484 (FAENEIVLDI…GFDNVKVYRP (79 aa)). Cysteine 458 serves as the catalytic Cysteine persulfide intermediate.

It belongs to the ThiI family.

The protein localises to the cytoplasm. The catalysed reaction is [ThiI sulfur-carrier protein]-S-sulfanyl-L-cysteine + a uridine in tRNA + 2 reduced [2Fe-2S]-[ferredoxin] + ATP + H(+) = [ThiI sulfur-carrier protein]-L-cysteine + a 4-thiouridine in tRNA + 2 oxidized [2Fe-2S]-[ferredoxin] + AMP + diphosphate. The enzyme catalyses [ThiS sulfur-carrier protein]-C-terminal Gly-Gly-AMP + S-sulfanyl-L-cysteinyl-[cysteine desulfurase] + AH2 = [ThiS sulfur-carrier protein]-C-terminal-Gly-aminoethanethioate + L-cysteinyl-[cysteine desulfurase] + A + AMP + 2 H(+). It functions in the pathway cofactor biosynthesis; thiamine diphosphate biosynthesis. Functionally, catalyzes the ATP-dependent transfer of a sulfur to tRNA to produce 4-thiouridine in position 8 of tRNAs, which functions as a near-UV photosensor. Also catalyzes the transfer of sulfur to the sulfur carrier protein ThiS, forming ThiS-thiocarboxylate. This is a step in the synthesis of thiazole, in the thiamine biosynthesis pathway. The sulfur is donated as persulfide by IscS. This is tRNA sulfurtransferase from Psychromonas ingrahamii (strain DSM 17664 / CCUG 51855 / 37).